Consider the following 808-residue polypeptide: Sucrose synthase 4 (808 aa).

Residues 277-754 (MVFNVVILSP…GLERIQEKYT (478 aa)) form a GT-B glycosyltransferase region.

The protein belongs to the glycosyltransferase 1 family. Plant sucrose synthase subfamily. As to expression, detected in the whole plant with highest expression in young rosette leaves and roots.

The catalysed reaction is an NDP-alpha-D-glucose + D-fructose = a ribonucleoside 5'-diphosphate + sucrose + H(+). Its function is as follows. Sucrose-cleaving enzyme that provides UDP-glucose and fructose for various metabolic pathways. This is Sucrose synthase 4 (SUS4) from Arabidopsis thaliana (Mouse-ear cress).